The following is a 312-amino-acid chain: MVEFEDQLVFNSISARALKAYFTAKINEMVDELVTRKCPQKKKSQAKKPEVRIPVDLVKSSFVKKFGLCNYGGILISLINSLVENNFFTKNGKLDDTGKKELVLTDVEKRILNTVDKSSPLYIDISDVKVLAARLKRSATQFNFNGHTYHLENDKIEDLINQLVKDESIQLDEKSSIKDSMYVIPDELIDVLKTRSFRSPQVKDNIISSTRLYDYFTRVTKRDESSIYVILKDPRIASILSLETVEMGAFMYTKHSMLTNAISSEVDRYSEKFQESFYEDIAEFVEENERVDVSRVVECLTVPNITISSNAE.

This sequence belongs to the orthopoxvirus OPG077 family.

It is found in the virion. Functionally, DNA-binding protein which binds to the hairpin form of the viral telomeric sequence. Required for the production of mature virions (MV). This is Telomere-binding protein OPG077 (OPG077) from Variola virus (isolate Human/India/Ind3/1967) (VARV).